Consider the following 1493-residue polypeptide: Son of sevenless homolog (1493 aa).

The region spanning 244 to 448 is the DH domain; it reads TYESVAVDFL…ERVVGCVSDM (205 aa). The PH domain maps to 496 to 606; it reads ELEKDGDLGM…WMAVLVKVTT (111 aa). The 169-residue stretch at 656–824 folds into the N-terminal Ras-GEF domain; sequence GIPVIKCGTV…TILALIEKRV (169 aa). The Ras-GEF domain occupies 897–1164; sequence HPIEIGRQLT…YNKSLEIQPK (268 aa). 3 disordered regions span residues 1067–1091, 1165–1248, and 1263–1493; these read KSPP…DPEN, GLDT…DDAP, and HPKI…SSNK. Residues 1079–1088 show a composition bias toward basic and acidic residues; the sequence is QQKDDLKASD. Composition is skewed to polar residues over residues 1208–1231 and 1279–1289; these read HSQN…NTPL and SRANQSNSVSL. Positions 1308–1326 are enriched in low complexity; that stretch reads STATSPTTLTTTTTPSSAG. A compositionally biased stretch (polar residues) spans 1350-1361; that stretch reads LTPSRDNSSPSA. Over residues 1381 to 1400 the composition is skewed to low complexity; sequence STSSDVSSSPSTSGSTSSAT. Residues 1402–1417 are compositionally biased toward basic and acidic residues; sequence ENQEQLRVIFDREESH. Residues 1426-1435 show a composition bias toward pro residues; sequence PLPPALPPPR. Polar residues predominate over residues 1453 to 1464; that stretch reads HNSNSPTLSSEQ.

Interacts with cmd-1 in the presence of Ca(2+).

In terms of biological role, promotes the exchange of Ras-bound GDP by GTP. May regulate signaling pathways downstream of receptor tyrosine kinase, egl-15 and let-23. Required for larval and male spicule development, fluid homeostasis, vulva induction, spermatogenesis, and oogenesis by promoting meiosis prophase exit during oocyte maturation. Required for the delamination of G1 cell by promoting the loss of cell junctions and detachment from the excretory system during larval development. Plays a role in nicotinic acetylcholine receptor (nAChR)-mediated sensitivity to nicotine. Regulates synaptic levels of nAchR subunit lev-1 in the nerve cord. This Caenorhabditis elegans protein is Son of sevenless homolog.